The chain runs to 94 residues: Small ribosomal subunit protein uS19 (94 aa).

It belongs to the universal ribosomal protein uS19 family.

Its function is as follows. Protein S19 forms a complex with S13 that binds strongly to the 16S ribosomal RNA. The chain is Small ribosomal subunit protein uS19 from Endomicrobium trichonymphae.